Reading from the N-terminus, the 862-residue chain is DNA mismatch repair protein MutS (862 aa).

608–615 provides a ligand contact to ATP; it reads GPNMAGKS.

Belongs to the DNA mismatch repair MutS family.

In terms of biological role, this protein is involved in the repair of mismatches in DNA. It is possible that it carries out the mismatch recognition step. This protein has a weak ATPase activity. The chain is DNA mismatch repair protein MutS from Borrelia garinii subsp. bavariensis (strain ATCC BAA-2496 / DSM 23469 / PBi) (Borreliella bavariensis).